A 121-amino-acid polypeptide reads, in one-letter code: Large ribosomal subunit protein bL12 (121 aa).

This sequence belongs to the bacterial ribosomal protein bL12 family. In terms of assembly, homodimer. Part of the ribosomal stalk of the 50S ribosomal subunit. Forms a multimeric L10(L12)X complex, where L10 forms an elongated spine to which 2 to 4 L12 dimers bind in a sequential fashion. Binds GTP-bound translation factors.

Its function is as follows. Forms part of the ribosomal stalk which helps the ribosome interact with GTP-bound translation factors. Is thus essential for accurate translation. The polypeptide is Large ribosomal subunit protein bL12 (Pectobacterium atrosepticum (strain SCRI 1043 / ATCC BAA-672) (Erwinia carotovora subsp. atroseptica)).